Reading from the N-terminus, the 441-residue chain is G2/mitotic-specific cyclin-2 (441 aa).

It belongs to the cyclin family. Cyclin AB subfamily. As to quaternary structure, interacts with the CDC2 and CDK2 protein kinases to form a serine/threonine kinase holoenzyme complex. The cyclin subunit imparts substrate specificity to the complex.

Its function is as follows. Essential for the control of the cell cycle at the G2/M (mitosis) transition. G2/M cyclins accumulate steadily during G2 and are abruptly destroyed at mitosis. The sequence is that of G2/mitotic-specific cyclin-2 from Antirrhinum majus (Garden snapdragon).